The following is a 61-amino-acid chain: Photosystem II reaction center X protein (61 aa).

The helical transmembrane segment at 26–46 (IGSFIAAALLIVIPATAFLIF) threads the bilayer.

This sequence belongs to the PsbX family. Type 2 subfamily. In terms of assembly, PSII consists of a core antenna complex that captures photons, and an electron transfer chain that converts photonic excitation into a charge separation. PSII forms dimeric complexes.

It is found in the cellular thylakoid membrane. Its function is as follows. Involved in the binding and/or turnover of quinones at the Q(B) site of Photosystem II. This Prochlorococcus marinus (strain MIT 9312) protein is Photosystem II reaction center X protein.